The sequence spans 566 residues: Type 2 DNA topoisomerase 6 subunit B (566 aa).

Residues Asn48, Asp80, 101–102 (TK), 111–118 (GQQGIGIS), and Lys475 contribute to the ATP site.

The protein belongs to the TOP6B family. In terms of assembly, homodimer. Heterotetramer of two Top6A and two Top6B chains.

It catalyses the reaction ATP-dependent breakage, passage and rejoining of double-stranded DNA.. Functionally, relaxes both positive and negative superturns and exhibits a strong decatenase activity. The sequence is that of Type 2 DNA topoisomerase 6 subunit B from Thermococcus sibiricus (strain DSM 12597 / MM 739).